Here is a 542-residue protein sequence, read N- to C-terminus: Prolyl 3-hydroxylase OGFOD1 (542 aa).

The Fe2OG dioxygenase domain occupies 134–239 (DLESTIDMSC…RLSISGWFHG (106 aa)). Residues His155 and Asp157 each contribute to the Fe cation site. Residue Tyr169 participates in 2-oxoglutarate binding. His218 lines the Fe cation pocket. Position 230 (Arg230) interacts with 2-oxoglutarate. The disordered stretch occupies residues 373–435 (EDEMNDKKEA…TKKESSVPTC (63 aa)). The segment covering 400–416 (ENNQTAISNNSQQSNEQ) has biased composition (polar residues).

This sequence belongs to the TPA1 family. Monomer. Fe(2+) is required as a cofactor. Requires L-ascorbate as cofactor.

The protein localises to the cytoplasm. It is found in the nucleus. The enzyme catalyses [ribosomal protein uS12]-L-proline + 2-oxoglutarate + O2 = [ribosomal protein uS12]-(3S)-3-hydroxy-L-proline + succinate + CO2. Functionally, prolyl 3-hydroxylase that catalyzes 3-hydroxylation of 'Pro-62' of small ribosomal subunit uS12 (RPS23), thereby regulating protein translation termination efficiency. Involved in stress granule formation. This chain is Prolyl 3-hydroxylase OGFOD1 (OGFOD1), found in Pongo abelii (Sumatran orangutan).